Consider the following 216-residue polypeptide: MKQDSRFPNLFILDHPLIQHKLTHMRDKDTSTRTFRELLREITLLMGYEITRNLPITTKRVETPLVEIDAPVIAGKKLAIVPVLRAGVGMSDGLLELIPSARVGHIGVYRANDHRPVEYLVRLPDLEDRIFILCDPMVATGYSAAHAIDVLKRRGVPGERLMFLALVAAPEGVQVFQDAHPDVKLYVASLDSHLDDHAYIVPGLGDAGDRLFGTKN.

5-phospho-alpha-D-ribose 1-diphosphate-binding positions include arginine 85, arginine 110, and 135 to 143; that span reads DPMVATGYS. Residues isoleucine 200 and 205–207 each bind uracil; that span reads GDA. Aspartate 206 is a binding site for 5-phospho-alpha-D-ribose 1-diphosphate.

This sequence belongs to the UPRTase family. It depends on Mg(2+) as a cofactor.

The enzyme catalyses UMP + diphosphate = 5-phospho-alpha-D-ribose 1-diphosphate + uracil. It functions in the pathway pyrimidine metabolism; UMP biosynthesis via salvage pathway; UMP from uracil: step 1/1. With respect to regulation, allosterically activated by GTP. Catalyzes the conversion of uracil and 5-phospho-alpha-D-ribose 1-diphosphate (PRPP) to UMP and diphosphate. In Burkholderia pseudomallei (strain 668), this protein is Uracil phosphoribosyltransferase.